Here is a 527-residue protein sequence, read N- to C-terminus: MSVQIFGDQVTEERAENARLSAFVGAIAVGDLVKSTLGPKGMDKLLQSASSNTCMVTNDGATILKSIPLDNPAAKVLVNISKVQDDEVGDGTTSVTVLSAELLREAEKLIDQSKIHPQTIIEGYRLASAAALDALTKAAVDNSHDKTMFREDLIHIAKTTLSSKILSQDKDHFAELATNAILRLKGSTNLEHIQIIKILGGKLSDSFLDEGFILAKKFGNNQPKRIENAKILIANTTLDTDKVKIFGTKFKVDSTAKLAQLEKAEREKMKNKIAKISKFGINTFINRQLIYDYPEQLFTDLGINSIEHADFEGVERLALVTGGEVVSTFDEPSKCKLGECDVIEEIMLGEQPFLKFSGCKAGEACTIVLRGATDQTLDEAERSLHDALSVLSQTTKETRTVLGGGCAEMVMSKAVDTEAQNIDGKKSLAVEAFARALRQLPTILADNAGFDSSELVSKLRSSIYNGISTSGLDLNNGTIADMRQLGIVESYKLKRAVVSSASEAAEVLLRVDNIIRARPRTANRQHM.

Ser-2 carries the N-acetylserine modification.

The protein belongs to the TCP-1 chaperonin family. Heterooligomeric complex of about 850 to 900 kDa that forms two stacked rings, 12 to 16 nm in diameter. Interacts with PLP2; this interaction leads to inhibition of CCT complex mediated actin folding.

It localises to the cytoplasm. In terms of biological role, molecular chaperone; assists the folding of proteins upon ATP hydrolysis. Known to play a role, in vitro, in the folding of actin and tubulin. In yeast may play a role in mitotic spindle formation. This Saccharomyces cerevisiae (strain ATCC 204508 / S288c) (Baker's yeast) protein is T-complex protein 1 subunit beta (CCT2).